Reading from the N-terminus, the 276-residue chain is MKNTIHINFAIFLIIANIIYSSASASTDISTVASPLFEGTEGCFLLYDASTNAEIAQFNKAKCATQMAPDSTFKIALSLMAFDAEIIDQKTIFKWDKTPKGMEIWNSNHTPKTWMQFSVVWVSQEITQKIGLNKIKNYLKDFDYGNQDFSGDKERNNGLTEAWLESSLKISPEEQIQFLRKIINHNLPVKNSAIENTIENMYLQDLDNSTKLYGKTGAGFTANRTLQNGWFEGFIISKSGHKYVFVSALTGNLGSNLTSSIKAKKNAITILNTLNL.

An N-terminal signal peptide occupies residues 1-25; sequence MKNTIHINFAIFLIIANIIYSSASA. Residue Ser-71 is the Acyl-ester intermediate of the active site. A beta-lactam is bound by residues Ser-71, Lys-74, Ser-118, Thr-216, and Ala-218. At Lys-74 the chain carries N6-carboxylysine.

It belongs to the class-D beta-lactamase family. As to quaternary structure, monomer.

It localises to the periplasm. It carries out the reaction a beta-lactam + H2O = a substituted beta-amino acid. Its activity is regulated as follows. Inhibited by penicillin sulfones. Only weakly inhibited by clavulanic acid and sulbactam. Its function is as follows. Class D beta-lactamase which confers resistance to the beta-lactam antibiotics, including amoxicillin and ticarcillin. Acts via hydrolysis of the beta-lactam ring. Has penicillin- and cephalosporin-hydrolyzing activities. The protein is Beta-lactamase OXA-1 of Escherichia coli.